A 430-amino-acid polypeptide reads, in one-letter code: Serine--tRNA ligase (430 aa).

Residue 235 to 237 (TAE) participates in L-serine binding. ATP contacts are provided by residues 266–268 (RRE) and Val282. Residue Glu289 coordinates L-serine. 353–356 (EASS) contributes to the ATP binding site. Ser389 contributes to the L-serine binding site.

This sequence belongs to the class-II aminoacyl-tRNA synthetase family. Type-1 seryl-tRNA synthetase subfamily. In terms of assembly, homodimer. The tRNA molecule binds across the dimer.

It is found in the cytoplasm. The catalysed reaction is tRNA(Ser) + L-serine + ATP = L-seryl-tRNA(Ser) + AMP + diphosphate + H(+). The enzyme catalyses tRNA(Sec) + L-serine + ATP = L-seryl-tRNA(Sec) + AMP + diphosphate + H(+). It participates in aminoacyl-tRNA biosynthesis; selenocysteinyl-tRNA(Sec) biosynthesis; L-seryl-tRNA(Sec) from L-serine and tRNA(Sec): step 1/1. Catalyzes the attachment of serine to tRNA(Ser). Is also able to aminoacylate tRNA(Sec) with serine, to form the misacylated tRNA L-seryl-tRNA(Sec), which will be further converted into selenocysteinyl-tRNA(Sec). This chain is Serine--tRNA ligase, found in Chlorobium luteolum (strain DSM 273 / BCRC 81028 / 2530) (Pelodictyon luteolum).